A 236-amino-acid chain; its full sequence is UPF0173 metal-dependent hydrolase AZC_2841 (236 aa).

It belongs to the UPF0173 family.

The chain is UPF0173 metal-dependent hydrolase AZC_2841 from Azorhizobium caulinodans (strain ATCC 43989 / DSM 5975 / JCM 20966 / LMG 6465 / NBRC 14845 / NCIMB 13405 / ORS 571).